The primary structure comprises 360 residues: Glycoprotein-N-acetylgalactosamine 3-beta-galactosyltransferase 1 (360 aa).

The Cytoplasmic segment spans residues methionine 1–lysine 7. The chain crosses the membrane as a helical; Signal-anchor for type II membrane protein span at residues valine 8–alanine 28. Over arginine 29–serine 360 the chain is Lumenal. A disulfide bond links cysteine 79 and cysteine 103. UDP-binding residues include methionine 82, glutamate 126, glycine 127, arginine 128, and lysine 134. The N-linked (GlcNAc...) asparagine glycan is linked to asparagine 148. Residue aspartate 157 participates in UDP binding. Aspartate 157 and aspartate 159 together coordinate Mn(2+). N-linked (GlcNAc...) asparagine glycosylation is present at asparagine 173. A disulfide bridge connects residues cysteine 220 and cysteine 234. A glycoprotein is bound at residue tryptophan 274. Cysteine 289 and cysteine 290 are disulfide-bonded. UDP is bound by residues histidine 298 and tyrosine 299. Histidine 298 provides a ligand contact to Mn(2+). Residues asparagine 341 and asparagine 347 are each glycosylated (N-linked (GlcNAc...) asparagine).

This sequence belongs to the glycosyltransferase 31 family. Beta3-Gal-T subfamily. Homodimer; disulfide-linked. It depends on Mn(2+) as a cofactor.

It localises to the membrane. The enzyme catalyses an N-acetyl-alpha-D-galactosaminyl derivative + UDP-alpha-D-galactose = a beta-D-galactosyl-(1-&gt;3)-N-acetyl-alpha-D-galactosaminyl derivative + UDP + H(+). It functions in the pathway protein modification; protein glycosylation. Functionally, glycosyltransferase that generates the core 1 O-glycan Gal-beta1-3GalNAc-alpha1-Ser/Thr (T antigen), which is a precursor for many extended O-glycans in glycoproteins. The chain is Glycoprotein-N-acetylgalactosamine 3-beta-galactosyltransferase 1 (c1galt1) from Xenopus laevis (African clawed frog).